The primary structure comprises 468 residues: Argininosuccinate lyase (468 aa).

Belongs to the lyase 1 family. Argininosuccinate lyase subfamily.

It is found in the cytoplasm. It carries out the reaction 2-(N(omega)-L-arginino)succinate = fumarate + L-arginine. The protein operates within amino-acid biosynthesis; L-arginine biosynthesis; L-arginine from L-ornithine and carbamoyl phosphate: step 3/3. This chain is Argininosuccinate lyase, found in Zymomonas mobilis subsp. mobilis (strain ATCC 31821 / ZM4 / CP4).